Here is a 339-residue protein sequence, read N- to C-terminus: Tetraacyldisaccharide 4'-kinase (339 aa).

Val62–Thr69 is a binding site for ATP.

Belongs to the LpxK family.

It carries out the reaction a lipid A disaccharide + ATP = a lipid IVA + ADP + H(+). It participates in glycolipid biosynthesis; lipid IV(A) biosynthesis; lipid IV(A) from (3R)-3-hydroxytetradecanoyl-[acyl-carrier-protein] and UDP-N-acetyl-alpha-D-glucosamine: step 6/6. In terms of biological role, transfers the gamma-phosphate of ATP to the 4'-position of a tetraacyldisaccharide 1-phosphate intermediate (termed DS-1-P) to form tetraacyldisaccharide 1,4'-bis-phosphate (lipid IVA). The protein is Tetraacyldisaccharide 4'-kinase of Xylella fastidiosa (strain M12).